A 673-amino-acid polypeptide reads, in one-letter code: MNDQGIKESIETLKEQIRKYDYHYYVLDEPLVPDAEYDRCFKALQQYEEQYPQFLSPDSPTQRVSGTPSDAFMPVAHKQPMLSLSNVFTIDELKAFIKRAIEKLDEPNQQLVFACEPKLDGLAVNMTYEGGILTHAATRGDGAVGENITANIKTIASVPLRLRVSNPPKLIEVRGEVYIPKADFEAYNARARELGEKTFANPRNAAAGSLRQLNPEISASRPLAIYCYSIGACEDYKLPNSHLEQLNLLKEFGFRVSPETRRAIGVEGCLDYYQYMLAKRNQLPFEIDGVVYKIDSISLQQQLGYVSRAPRFACAHKFPATEEMTRLIAVDFQVGRTGAVTPVARLEPVSVGGVTVSNATLHNFDEITRKDIRIGDTVIIRRAGDVIPEVVSVILEKRPINARKIELPKNCPVCGSEVVREADEAIARCIGGLYCKAQLKRMMWHFASRKAMYIEGLGSVLIDQLVDEGIVHHLADLYELDLQTLANLPRMGEKSAKNLLSALEKSKKTTFNRFLYALGIREIGEAGARVLAEHYCDVESLKSATIEELMTLNDIGPVAASHVVHFFAQAHNLEVIDRLLELGIHWPKPEKIQVNQQNPFFGKTVVLTGTLSAMGREEAKAKLLALGAKVSGSVSSKTDYVIAGSEAGSKLIKATELGVAIIEEDEFLKWVNS.

Residues 34 to 38 (DAEYD), 83 to 84 (SL), and glutamate 116 each bind NAD(+). The active-site N6-AMP-lysine intermediate is lysine 118. Arginine 139, glutamate 176, lysine 293, and lysine 317 together coordinate NAD(+). Positions 411, 414, 429, and 435 each coordinate Zn(2+). Positions 595–673 (NQQNPFFGKT…EDEFLKWVNS (79 aa)) constitute a BRCT domain.

Belongs to the NAD-dependent DNA ligase family. LigA subfamily. Requires Mg(2+) as cofactor. It depends on Mn(2+) as a cofactor.

The enzyme catalyses NAD(+) + (deoxyribonucleotide)n-3'-hydroxyl + 5'-phospho-(deoxyribonucleotide)m = (deoxyribonucleotide)n+m + AMP + beta-nicotinamide D-nucleotide.. In terms of biological role, DNA ligase that catalyzes the formation of phosphodiester linkages between 5'-phosphoryl and 3'-hydroxyl groups in double-stranded DNA using NAD as a coenzyme and as the energy source for the reaction. It is essential for DNA replication and repair of damaged DNA. This is DNA ligase from Legionella pneumophila (strain Paris).